The sequence spans 153 residues: Pheromone-binding protein Gp-9 (153 aa).

Residues 1-19 (MKTFVLHIFIFALVAFASA) form the signal peptide. Cystine bridges form between Cys-37-Cys-77, Cys-73-Cys-129, and Cys-118-Cys-138.

It belongs to the PBP/GOBP family. In terms of assembly, homodimer.

The protein resides in the secreted. In terms of biological role, colony queen number, a major feature of social organization, is associated with worker genotype for Gp-9. Colonies are headed by either a single reproductive queen (monogyne form) or multiple queens (polygyne form). Differences in worker Gp-9 genotypes between social forms may cause differences in workers' abilities to recognize queens and regulate their numbers. The sequence is that of Pheromone-binding protein Gp-9 from Solenopsis tridens (Fire ant).